Here is a 336-residue protein sequence, read N- to C-terminus: MFYSCLKKILFQLDPEHSHEFTFRHLKRITGTPLQFLISQSVPTKSVDCMGLSFKNPLGLAAGLDKNGDCIDVLGAMGFGFIEVGTVTPLPQQGNQKPRLFRVTEAEALINRMGFNNLGVDYLINNIKRSRFGGVLGINIGKNKETPLEVSKEDYLICMDKVYPYAGYIAVNISSPNTEKLRQLQYGDLLEDMLTSVKKKQTQLHEQHDRYVPVAVKISPDLSEEELIKLADAFLKHEIDGVIATNTTLDHSLIQGLNHCQQSGGLSGRPLQPSSNETIRLLSKELKGRIPIIGVGGIDSLMAAREKIAAGASLLQLYSGLIFQGPALIKKIIHHI.

FMN contacts are provided by residues 62-66 and T86; that span reads AGLDK. K66 contributes to the substrate binding site. Position 111-115 (111-115) interacts with substrate; sequence NRMGF. Residues N139 and N172 each coordinate FMN. N172 is a binding site for substrate. Catalysis depends on S175, which acts as the Nucleophile. N177 contributes to the substrate binding site. Residues K217 and T245 each coordinate FMN. 246-247 contacts substrate; the sequence is NT. FMN contacts are provided by residues G268, G297, and 318-319; that span reads YS.

Belongs to the dihydroorotate dehydrogenase family. Type 2 subfamily. As to quaternary structure, monomer. Requires FMN as cofactor.

It localises to the cell membrane. It catalyses the reaction (S)-dihydroorotate + a quinone = orotate + a quinol. It functions in the pathway pyrimidine metabolism; UMP biosynthesis via de novo pathway; orotate from (S)-dihydroorotate (quinone route): step 1/1. Its function is as follows. Catalyzes the conversion of dihydroorotate to orotate with quinone as electron acceptor. The chain is Dihydroorotate dehydrogenase (quinone) from Hamiltonella defensa subsp. Acyrthosiphon pisum (strain 5AT).